Consider the following 65-residue polypeptide: MAVVPKRKTSKQRKALRRSHHALEALTLVECKNCKQSIVPHQACKYCGFYKDKKVIKVALNDQVK.

The protein belongs to the bacterial ribosomal protein bL32 family.

In Metamycoplasma arthritidis (strain 158L3-1) (Mycoplasma arthritidis), this protein is Large ribosomal subunit protein bL32.